Consider the following 57-residue polypeptide: uncharacterized protein (57 aa).

The helical transmembrane segment at 34–54 (AALLDAAALVVIPGLLTAAAV) threads the bilayer.

The protein resides in the membrane. This is an uncharacterized protein from Dictyostelium discoideum (Social amoeba).